A 284-amino-acid chain; its full sequence is NH(3)-dependent NAD(+) synthetase (284 aa).

Residue 51 to 58 (GISGGIDS) participates in ATP binding. Mg(2+) is bound at residue Asp-57. Arg-148 serves as a coordination point for deamido-NAD(+). Position 168 (Thr-168) interacts with ATP. Residue Glu-173 coordinates Mg(2+). Deamido-NAD(+)-binding residues include Lys-181 and Asp-188. ATP is bound by residues Lys-197 and Thr-219. Deamido-NAD(+) is bound at residue 268–269 (HK).

The protein belongs to the NAD synthetase family. Homodimer.

It catalyses the reaction deamido-NAD(+) + NH4(+) + ATP = AMP + diphosphate + NAD(+) + H(+). The protein operates within cofactor biosynthesis; NAD(+) biosynthesis; NAD(+) from deamido-NAD(+) (ammonia route): step 1/1. In terms of biological role, catalyzes the ATP-dependent amidation of deamido-NAD to form NAD. Uses ammonia as a nitrogen source. The sequence is that of NH(3)-dependent NAD(+) synthetase from Burkholderia pseudomallei (strain 1106a).